Consider the following 243-residue polypeptide: Adenylate kinase 4 (243 aa).

40–45 (GSGKGT) is an ATP binding site. Residues 60-89 (ATGDMLRAAVAAKTPLGVKAKEAMDKGELV) form an NMP region. AMP-binding positions include Thr61, Arg66, 87–89 (ELV), 115–118 (GFPR), and Gln122. Residues 156 to 193 (GRWIHPSSGRSYHTKFAPPKVPGVDDVTGEPLIQRKDD) are LID. Residue Arg157 coordinates ATP. AMP is bound by residues Arg190 and Arg201.

Belongs to the adenylate kinase family.

The protein localises to the cytoplasm. The enzyme catalyses AMP + ATP = 2 ADP. Its function is as follows. Catalyzes the reversible transfer of the terminal phosphate group between ATP and AMP. Plays an important role in cellular energy homeostasis and in adenine nucleotide metabolism. The sequence is that of Adenylate kinase 4 (ADK-B) from Oryza sativa subsp. japonica (Rice).